The primary structure comprises 318 residues: Ankyrin repeat and SOCS box protein 7 (318 aa).

7 ANK repeats span residues Gln13–Gly42, Asn46–Val75, Gly80–Ile109, Asp116–Pro145, Lys149–Ile178, Asn180–Leu208, and Asp213–Thr242. One can recognise an SOCS box domain in the interval Leu265–Ile318.

It belongs to the ankyrin SOCS box (ASB) family. Interacts with CUL5. Interacts with RNF7. Interacts with PSRC1.

It participates in protein modification; protein ubiquitination. Functionally, probable substrate-recognition component of a SCF-like ECS (Elongin-Cullin-SOCS-box protein) E3 ubiquitin-protein ligase complex which mediates the ubiquitination and subsequent proteasomal degradation of target proteins. Plays a role in spindle dynamics and genome integrity by targeting the mitotic progression protein PSRC1 for proteasomal degradation in a cell cycle-dependent manner. Also participates in meiosis by mediating the proper attachment between kinetochores and microtubules. This chain is Ankyrin repeat and SOCS box protein 7 (ASB7), found in Macaca fascicularis (Crab-eating macaque).